Here is a 182-residue protein sequence, read N- to C-terminus: Adenine phosphoribosyltransferase (182 aa).

This sequence belongs to the purine/pyrimidine phosphoribosyltransferase family. Homodimer.

The protein resides in the cytoplasm. The enzyme catalyses AMP + diphosphate = 5-phospho-alpha-D-ribose 1-diphosphate + adenine. It functions in the pathway purine metabolism; AMP biosynthesis via salvage pathway; AMP from adenine: step 1/1. Catalyzes a salvage reaction resulting in the formation of AMP, that is energically less costly than de novo synthesis. The sequence is that of Adenine phosphoribosyltransferase from Saccharopolyspora erythraea (strain ATCC 11635 / DSM 40517 / JCM 4748 / NBRC 13426 / NCIMB 8594 / NRRL 2338).